The chain runs to 356 residues: Probable D-xylulose reductase A (356 aa).

Residues Cys45, His70, and Glu71 each contribute to the Zn(2+) site. 180-185 is an NAD(+) binding site; that stretch reads GAGPVG.

It belongs to the zinc-containing alcohol dehydrogenase family. Zn(2+) serves as cofactor.

It catalyses the reaction xylitol + NAD(+) = D-xylulose + NADH + H(+). The protein operates within carbohydrate degradation; L-arabinose degradation via L-arabinitol; D-xylulose 5-phosphate from L-arabinose (fungal route): step 4/5. Its function is as follows. Xylitol dehydrogenase which catalyzes the conversion of xylitol to D-xylulose. Xylose is a major component of hemicelluloses such as xylan. Most fungi utilize D-xylose via three enzymatic reactions, xylose reductase (XR), xylitol dehydrogenase (XDH), and xylulokinase, to form xylulose 5-phosphate, which enters pentose phosphate pathway. The protein is Probable D-xylulose reductase A (xdhA) of Arthroderma otae (strain ATCC MYA-4605 / CBS 113480) (Microsporum canis).